The following is a 416-amino-acid chain: MDYREFFSQFKYLSEKPGIGGRIKAQPEDFIVMEEPLRSAFDGKKYAIFLLKKRNWDTMAAVKEIAKRAGISYKDIGFAGTKDRHAVTYQYISVPRDAKEKVEAVRIKDIELRFVSYGRALKLGHLLGNRFKIIVRDVDESAFERTKEIVRELRSKGGFPNYFGYQRFGERRVTNHLIGKLLLKGDFEGAARLFLGAHGGGMEGDEARKNFWETGDVNRALEEFPGFLRYERAMLYRYKETGSWRKAFLSLPLPIMRIFIHAYQSYLFNLYISRRIEEGLPLNEALVGDIVVQIKGGIPYRDRTYRVTETNIDFVKEKIRKDEAMVSGPLFGFSMRRARGVPGRLEEELLAEENLSLKDFKRLPKPMAEPGGRRELLIRPLGLTYGYVPSVGMCFRFFLPKGVYATSVLREIMKDH.

D83 serves as the catalytic Nucleophile. The region spanning 158–379 is the TRUD domain; the sequence is GFPNYFGYQR…PGGRRELLIR (222 aa).

Belongs to the pseudouridine synthase TruD family.

It carries out the reaction uridine(13) in tRNA = pseudouridine(13) in tRNA. Could be responsible for synthesis of pseudouridine from uracil-13 in transfer RNAs. This Thermococcus onnurineus (strain NA1) protein is Probable tRNA pseudouridine synthase D.